The primary structure comprises 301 residues: Probable deoxyhypusine synthase 1 (301 aa).

Residue Lys-269 is the Nucleophile of the active site.

The protein belongs to the deoxyhypusine synthase family. Requires NAD(+) as cofactor.

It catalyses the reaction [eIF5A protein]-L-lysine + spermidine = [eIF5A protein]-deoxyhypusine + propane-1,3-diamine. Its pathway is protein modification; eIF5A hypusination. Catalyzes the NAD-dependent oxidative cleavage of spermidine and the subsequent transfer of the butylamine moiety of spermidine to the epsilon-amino group of a specific lysine residue of the eIF-5A precursor protein to form the intermediate deoxyhypusine residue. In Archaeoglobus fulgidus (strain ATCC 49558 / DSM 4304 / JCM 9628 / NBRC 100126 / VC-16), this protein is Probable deoxyhypusine synthase 1 (dys1).